Reading from the N-terminus, the 688-residue chain is MTARRILVTSALPYANGQIHIGHLVEYIQTDIWVRFQRMMGNEVYYVGADDTHGTPVMLRAEKEGITPKQLIDRVWTEHKRDFDSFLVSFDNYYSTDAEENRELCEKIYLALKADDLIAEREVEQFYDPVKNMFLPDRFIKGECPKCGAKDQYGDSCEVCGTTYVPTDLKNPYSVVSGATPVRKSSTHFFFKLSDPRCETFLREWVADLAQPEAANKMQEWLGSEGEASTLSDWDISRDAPYFGFEIPGAPGKYFYVWLDAPIGYYASFKNLAEKKGIDFDAWVGPHSTAEQYHFIGKDILYFHTLFWPAMLRFSGYRTPTNVFAHGFLTVDGAKMSKSRGTFITAQSYIDTGMNPEWLRYYFAAKLNASMEDLDLNLDDFIARVNSDLIGKYVNIASRAAGFLVKRFEGKVDEAALAHPLLKQLREAAPQVAQLYEAREYSKALRLVMELTDTVNAFVDTEKPWELAKDEAKRSALHAACSVSLEAFRLLTVYLKPVVPTVAAGVERFLNVEPLDWRAIDKQLSASSPVQAYQHLMTRVDAKQVDALLAANRESLQATAPAAGAAAAASIEPIADTITIDDFAKIDLRVAKIVECQKVEGSSKLLQLTLDLGEGRTRNVFSGIQSAYTPEQLVGKLTVVVANLAPRKMKFGVSEGMVLAASAADEKANPGLYILEPHSGAVPGMRIG.

A 'HIGH' region motif is present at residues 13-23; that stretch reads PYANGQIHIGH. C144, C147, C157, and C160 together coordinate Zn(2+). Positions 335 to 339 match the 'KMSKS' region motif; that stretch reads KMSKS. K338 lines the ATP pocket. The tRNA-binding domain maps to 582 to 688; the sequence is DFAKIDLRVA…SGAVPGMRIG (107 aa).

It belongs to the class-I aminoacyl-tRNA synthetase family. MetG type 1 subfamily. Homodimer. Zn(2+) serves as cofactor.

It is found in the cytoplasm. The catalysed reaction is tRNA(Met) + L-methionine + ATP = L-methionyl-tRNA(Met) + AMP + diphosphate. In terms of biological role, is required not only for elongation of protein synthesis but also for the initiation of all mRNA translation through initiator tRNA(fMet) aminoacylation. The sequence is that of Methionine--tRNA ligase from Cupriavidus pinatubonensis (strain JMP 134 / LMG 1197) (Cupriavidus necator (strain JMP 134)).